The sequence spans 1086 residues: Lon protease homolog, mitochondrial (1086 aa).

The N-terminal 55 residues, 1–55, are a transit peptide targeting the mitochondrion; that stretch reads MLRTSCTSSLRRVVGKYVVSPLVASQIRFATSSVRSQPYLLNSELTELPAQFKRY. The disordered stretch occupies residues 61-176; that stretch reads TEKPEGDVPE…EPNEIVTNAG (116 aa). The span at 69–83 shows a compositional bias: low complexity; it reads PESGPEPSGESGISE. Over residues 85–120 the composition is skewed to basic and acidic residues; that stretch reads SNVENDKHDGNDEIKPEAEKNEKDEIEKPEIDKDAI. Residues 124–163 are compositionally biased toward low complexity; sequence DGVSESSVENVSGSSSAAGGASAPPSGNSNNNNNNNNNNN. The Lon N-terminal domain occupies 183-406; it reads LLAIPMKDRP…KALELLKVEL (224 aa). 558–565 lines the ATP pocket; it reads GPPGTGKT. Basic and acidic residues-rich tracts occupy residues 767-782 and 815-827; these read EAREGESKSKSEEAKS and KVDEAKPVESEEL. 2 disordered regions span residues 767-788 and 800-835; these read EAREGESKSKSEEAKSEAITGS and KAQSIEEPSVESASQKVDEAKPVESEELKSDEEEEE. In terms of domain architecture, Lon proteolytic spans 871 to 1059; it reads IPPPGVATGL…QDVFDEIFPN (189 aa). Residues S965 and K1008 contribute to the active site.

The protein belongs to the peptidase S16 family. Homohexamer or homoheptamer. Organized in a ring with a central cavity.

The protein resides in the mitochondrion matrix. The enzyme catalyses Hydrolysis of proteins in presence of ATP.. ATP-dependent serine protease that mediates the selective degradation of misfolded, unassembled or oxidatively damaged polypeptides as well as certain short-lived regulatory proteins in the mitochondrial matrix. May also have a chaperone function in the assembly of inner membrane protein complexes. Participates in the regulation of mitochondrial gene expression and in the maintenance of the integrity of the mitochondrial genome. Binds to mitochondrial DNA in a site-specific manner. This is Lon protease homolog, mitochondrial from Scheffersomyces stipitis (strain ATCC 58785 / CBS 6054 / NBRC 10063 / NRRL Y-11545) (Yeast).